The primary structure comprises 286 residues: Ribosomal RNA small subunit methyltransferase A (286 aa).

6 residues coordinate S-adenosyl-L-methionine: asparagine 33, valine 35, glycine 60, glutamate 81, aspartate 111, and asparagine 129.

It belongs to the class I-like SAM-binding methyltransferase superfamily. rRNA adenine N(6)-methyltransferase family. RsmA subfamily.

The protein resides in the cytoplasm. The catalysed reaction is adenosine(1518)/adenosine(1519) in 16S rRNA + 4 S-adenosyl-L-methionine = N(6)-dimethyladenosine(1518)/N(6)-dimethyladenosine(1519) in 16S rRNA + 4 S-adenosyl-L-homocysteine + 4 H(+). Functionally, specifically dimethylates two adjacent adenosines (A1518 and A1519) in the loop of a conserved hairpin near the 3'-end of 16S rRNA in the 30S particle. May play a critical role in biogenesis of 30S subunits. This chain is Ribosomal RNA small subunit methyltransferase A, found in Streptomyces coelicolor (strain ATCC BAA-471 / A3(2) / M145).